We begin with the raw amino-acid sequence, 362 residues long: Ciliary neurotrophic factor receptor subunit alpha (362 aa).

An N-terminal signal peptide occupies residues 1 to 19 (MANPVPSACCVVLAAVVVV). An Ig-like C2-type domain is found at 23–103 (RHSQQDSHIQ…HLKYQTYLRV (81 aa)). Cysteines 44 and 87 form a disulfide. N-linked (GlcNAc...) asparagine glycosylation is found at Asn58, Asn68, Asn140, and Asn188. 2 consecutive Fibronectin type-III domains span residues 106–203 (PPKE…VKPD) and 204–304 (PPES…TEEP). Positions 288-292 (WSDWS) match the WSXWS motif motif. Asp334 carries the GPI-anchor amidated aspartate lipid modification. A propeptide spans 335–362 (KGAGVGSGAVAVCWTAGLVLAAYGVLFI) (removed in mature form).

It belongs to the type I cytokine receptor family. Type 3 subfamily. As to quaternary structure, heterotrimer of the alpha subunit, LIFR and IL6ST. In terms of tissue distribution, highly expressed in nervous system. Also found in skeletal muscle.

The protein resides in the cell membrane. Functionally, binds to CNTF (GPA). The alpha subunit provides the receptor specificity. This Gallus gallus (Chicken) protein is Ciliary neurotrophic factor receptor subunit alpha (CNTFR).